The sequence spans 432 residues: MSAPSRFDRGHTDDLMTFLSASPTPYHAVASAAARLEKAGFRQVAETDAWEATSGGKYVLRGGAIVAWYVPEGAAAHTPFRIVGAHTDSPNLRVKPRPDTGAHGWRQVAVEIYGGPLMNSWLDRDLGLAGRLSLRDGSTRLVDVDRPLLRVPQLAIHMDRNVSTEGLKLDKQRHLQPVWGLGDSVRDGDLIAFLEDEAGLARGEVTGWDLMTHSVEPPAYLGRDRELVAGPRMDNLLSVHAGTAALASVAASGADLPYIPVLAAFDHEETGSQSDTGADGPLLGGVLERSVFARGGSYEDRARAFAGTVCLSSDTGHAVHPNYAERHDPTHHPRINGGPILKVNVNNRYATDGSGRAVFAAACEKADIPFQTFVSNNSMPCGTTIGPITAARHGISTVDIGVAILSMHSARELCGADDPHLLANALVAFLQP.

His86, His157, and His408 together coordinate Zn(2+).

This sequence belongs to the peptidase M18 family. Requires Zn(2+) as cofactor.

The chain is Probable M18 family aminopeptidase 2 (apeB) from Streptomyces coelicolor (strain ATCC BAA-471 / A3(2) / M145).